The following is a 130-amino-acid chain: Blasticidin-S deaminase (130 aa).

The 129-residue stretch at 1–129 (MPLSQEESTL…ELLPSGYMNR (129 aa)) folds into the CMP/dCMP-type deaminase domain. A substrate-binding site is contributed by S28. Position 54 (C54) interacts with Zn(2+). The active-site Proton donor is the E56. Position 82 (R82) interacts with substrate. 2 residues coordinate Zn(2+): C88 and C91. Position 126 (Y126) interacts with substrate.

The protein belongs to the cytidine and deoxycytidylate deaminase family. Homotetramer. Zn(2+) is required as a cofactor.

It carries out the reaction blasticidin S + H2O + H(+) = deaminohydroxyblasticidin S + NH4(+). In terms of biological role, catalyzes the deamination of the cytosine moiety of the antibiotics blasticidin S, cytomycin and acetylblasticidin S. This Aspergillus terreus (strain NIH 2624 / FGSC A1156) protein is Blasticidin-S deaminase (bsd).